We begin with the raw amino-acid sequence, 311 residues long: Homeobox protein knotted-1-like 10 (311 aa).

Disordered stretches follow at residues 1 to 45 (MEDL…PATT) and 153 to 184 (LCGG…DAAD). Over residues 12–22 (SRGGGGGGGGA) the composition is skewed to gly residues. Residues 197–217 (ELKEMLLKKYSGCLSRLRSEF) form the ELK domain. The homeobox; TALE-type DNA-binding region spans 218–281 (LKKRKKGKLP…NQRKRHWKPS (64 aa)).

This sequence belongs to the TALE/KNOX homeobox family.

Its subcellular location is the nucleus. Probable transcription factor that may be involved in shoot formation during embryogenesis. The chain is Homeobox protein knotted-1-like 10 (OSH71) from Oryza sativa subsp. indica (Rice).